A 144-amino-acid polypeptide reads, in one-letter code: Granulocyte-macrophage colony-stimulating factor (144 aa).

A signal peptide spans 1–17 (MWLQNLLLLGTVVCSFS). Residue Ser-24 is glycosylated (O-linked (GalNAc...) serine). O-linked (GalNAc...) threonine glycosylation is present at Thr-27. N-linked (GlcNAc...) asparagine glycans are attached at residues Asn-44 and Asn-54. 2 disulfide bridges follow: Cys-71-Cys-113 and Cys-105-Cys-138.

Belongs to the GM-CSF family. As to quaternary structure, monomer. The signaling GM-CSF receptor complex is a dodecamer of two head-to-head hexamers of two alpha, two beta, and two ligand subunits.

It localises to the secreted. Its function is as follows. Cytokine that stimulates the growth and differentiation of hematopoietic precursor cells from various lineages, including granulocytes, macrophages, eosinophils and erythrocytes. This is Granulocyte-macrophage colony-stimulating factor (CSF2) from Cervus elaphus (Red deer).